The sequence spans 169 residues: Lipoprotein signal peptidase (169 aa).

4 helical membrane passes run 4–24, 29–49, 70–90, and 101–121; these read PICS…ILDI, WVMA…FNLT, WFFA…MYRS, and YALI…HGAV. Residues Asp-123 and Asp-141 contribute to the active site. The chain crosses the membrane as a helical span at residues 137–157; the sequence is FNLADVAISIGAVLVIFEGFL.

Belongs to the peptidase A8 family.

It localises to the cell inner membrane. The catalysed reaction is Release of signal peptides from bacterial membrane prolipoproteins. Hydrolyzes -Xaa-Yaa-Zaa-|-(S,diacylglyceryl)Cys-, in which Xaa is hydrophobic (preferably Leu), and Yaa (Ala or Ser) and Zaa (Gly or Ala) have small, neutral side chains.. The protein operates within protein modification; lipoprotein biosynthesis (signal peptide cleavage). This protein specifically catalyzes the removal of signal peptides from prolipoproteins. The polypeptide is Lipoprotein signal peptidase (Yersinia pseudotuberculosis serotype O:1b (strain IP 31758)).